A 288-amino-acid polypeptide reads, in one-letter code: Acetyl-coenzyme A carboxylase carboxyl transferase subunit beta (288 aa).

The region spanning leucine 32–valine 288 is the CoA carboxyltransferase N-terminal domain. Zn(2+) contacts are provided by cysteine 36, cysteine 39, cysteine 54, and cysteine 57. The C4-type zinc finger occupies cysteine 36–cysteine 57.

Belongs to the AccD/PCCB family. Acetyl-CoA carboxylase is a heterohexamer composed of biotin carboxyl carrier protein (AccB), biotin carboxylase (AccC) and two subunits each of ACCase subunit alpha (AccA) and ACCase subunit beta (AccD). Zn(2+) is required as a cofactor.

The protein localises to the cytoplasm. The enzyme catalyses N(6)-carboxybiotinyl-L-lysyl-[protein] + acetyl-CoA = N(6)-biotinyl-L-lysyl-[protein] + malonyl-CoA. The protein operates within lipid metabolism; malonyl-CoA biosynthesis; malonyl-CoA from acetyl-CoA: step 1/1. Functionally, component of the acetyl coenzyme A carboxylase (ACC) complex. Biotin carboxylase (BC) catalyzes the carboxylation of biotin on its carrier protein (BCCP) and then the CO(2) group is transferred by the transcarboxylase to acetyl-CoA to form malonyl-CoA. The protein is Acetyl-coenzyme A carboxylase carboxyl transferase subunit beta of Lactococcus lactis subsp. lactis (strain IL1403) (Streptococcus lactis).